A 480-amino-acid chain; its full sequence is Proline--tRNA ligase (480 aa).

The protein belongs to the class-II aminoacyl-tRNA synthetase family. ProS type 3 subfamily. In terms of assembly, homodimer.

The protein localises to the cytoplasm. It catalyses the reaction tRNA(Pro) + L-proline + ATP = L-prolyl-tRNA(Pro) + AMP + diphosphate. Its function is as follows. Catalyzes the attachment of proline to tRNA(Pro) in a two-step reaction: proline is first activated by ATP to form Pro-AMP and then transferred to the acceptor end of tRNA(Pro). This is Proline--tRNA ligase from Mycobacterium leprae (strain Br4923).